A 383-amino-acid chain; its full sequence is Dihydroorotase (383 aa).

Zn(2+) is bound by residues histidine 47 and histidine 49. Residues 49–51 (HFR) and asparagine 81 each bind substrate. Zn(2+) contacts are provided by lysine 128, histidine 159, histidine 198, and aspartate 264. The residue at position 128 (lysine 128) is an N6-carboxylysine. Residue aspartate 264 is part of the active site. Residues histidine 268 and 280–281 (PG) contribute to the substrate site.

Belongs to the metallo-dependent hydrolases superfamily. DHOase family. Class I DHOase subfamily. Requires Zn(2+) as cofactor.

It carries out the reaction (S)-dihydroorotate + H2O = N-carbamoyl-L-aspartate + H(+). The protein operates within pyrimidine metabolism; UMP biosynthesis via de novo pathway; (S)-dihydroorotate from bicarbonate: step 3/3. Functionally, catalyzes the reversible cyclization of carbamoyl aspartate to dihydroorotate. In Pyrobaculum aerophilum (strain ATCC 51768 / DSM 7523 / JCM 9630 / CIP 104966 / NBRC 100827 / IM2), this protein is Dihydroorotase.